We begin with the raw amino-acid sequence, 614 residues long: MNRFIAFFRSVFLIGLVATAFGALPARAANETAPDYALSMHGDVALPADYTHFPYTNPDAPKKGSLTVGVVGTFDSLNPFVLKSMRTTARGLYNDGEFGNMVYQTLMLRSRDEPFTLYSLLAEKVAIDPERKWVEFTLNPKAKWSDGQPVTVDDVLFTYDILTEKGRPPYNSRMSRVAKIEKTGERSVRFTFNEKSDREFPMLIAGSMPVLPKHAINRDTFGNSTLEPPIGSGPYVVASVQPGQRIVYKRNPDYWGKDLPSQRGFNNFDKISIEYYRNETSLFESFKKGILDIFIEGNPIRWEKLYDFPAVEQGKVIKDTFEKGTPADMLGFVFNTRRPIFADRRVRQALGLLFDFEWANSNLFAGQYRRTQSFWEGSQLSSVGRPADARERELLAPFPGAVREDVMNGTWHPPVTDGSGHDRVPAKKAYDLLSQAGFQFKDGMAIDPTGKPFAFEIMTRSPDEEKIALAYQRNLSRLGIAVEIHTVDDAQYQQRLQTFDYDMILGALASSLSPGNEQWLRWGSASRDVQGSFNFAGVADPAVDAMIEALLAARNRADFVSAVRALDRVLISGDYYVPLYHLPYQWVARWDRIEHPQKTPLSGYQLPAWWHTSQ.

Residues 1-28 (MNRFIAFFRSVFLIGLVATAFGALPARA) form the signal peptide.

Belongs to the bacterial solute-binding protein 5 family.

It is found in the periplasm. This is Putative binding protein BMEII0691 from Brucella melitensis biotype 1 (strain ATCC 23456 / CCUG 17765 / NCTC 10094 / 16M).